The sequence spans 202 residues: Glycerol-3-phosphate acyltransferase (202 aa).

6 consecutive transmembrane segments (helical) span residues 2 to 22, 54 to 74, 85 to 105, 120 to 140, 141 to 161, and 162 to 182; these read MIIVMLLLSYLIGAFPSGFVI, FLVTFLDIFKGFITVFFPLWL, FFTNGLIVGLFAILGHVYPVY, VVLGVNPILLLILAIIFFIIL, KIFKYVSLASIVAAICCVIGS, and LIIQDYILLVVSFLVSIILII.

This sequence belongs to the PlsY family. Probably interacts with PlsX.

It localises to the cell membrane. It catalyses the reaction an acyl phosphate + sn-glycerol 3-phosphate = a 1-acyl-sn-glycero-3-phosphate + phosphate. The protein operates within lipid metabolism; phospholipid metabolism. Its function is as follows. Catalyzes the transfer of an acyl group from acyl-phosphate (acyl-PO(4)) to glycerol-3-phosphate (G3P) to form lysophosphatidic acid (LPA). This enzyme utilizes acyl-phosphate as fatty acyl donor, but not acyl-CoA or acyl-ACP. The sequence is that of Glycerol-3-phosphate acyltransferase from Staphylococcus aureus (strain bovine RF122 / ET3-1).